Reading from the N-terminus, the 185-residue chain is Ribosome-recycling factor (185 aa).

The protein belongs to the RRF family.

The protein resides in the cytoplasm. Responsible for the release of ribosomes from messenger RNA at the termination of protein biosynthesis. May increase the efficiency of translation by recycling ribosomes from one round of translation to another. This is Ribosome-recycling factor from Clostridium kluyveri (strain NBRC 12016).